Here is a 198-residue protein sequence, read N- to C-terminus: Elongation factor Ts (198 aa).

The segment at 81 to 84 is involved in Mg(2+) ion dislocation from EF-Tu; that stretch reads TDFV.

This sequence belongs to the EF-Ts family.

It is found in the cytoplasm. Functionally, associates with the EF-Tu.GDP complex and induces the exchange of GDP to GTP. It remains bound to the aminoacyl-tRNA.EF-Tu.GTP complex up to the GTP hydrolysis stage on the ribosome. This is Elongation factor Ts from Pseudothermotoga lettingae (strain ATCC BAA-301 / DSM 14385 / NBRC 107922 / TMO) (Thermotoga lettingae).